The chain runs to 280 residues: Ribosomal protein L11 methyltransferase (280 aa).

4 residues coordinate S-adenosyl-L-methionine: T130, G151, D172, and N213.

This sequence belongs to the methyltransferase superfamily. PrmA family.

It localises to the cytoplasm. It catalyses the reaction L-lysyl-[protein] + 3 S-adenosyl-L-methionine = N(6),N(6),N(6)-trimethyl-L-lysyl-[protein] + 3 S-adenosyl-L-homocysteine + 3 H(+). Its function is as follows. Methylates ribosomal protein L11. The sequence is that of Ribosomal protein L11 methyltransferase from Nitratiruptor sp. (strain SB155-2).